Here is a 200-residue protein sequence, read N- to C-terminus: Probable molybdenum cofactor guanylyltransferase (200 aa).

Residues 9–11 (LAG), Lys21, Asp69, and Asp100 contribute to the GTP site. Position 100 (Asp100) interacts with Mg(2+).

Belongs to the MobA family. Mg(2+) serves as cofactor.

Its subcellular location is the cytoplasm. The enzyme catalyses Mo-molybdopterin + GTP + H(+) = Mo-molybdopterin guanine dinucleotide + diphosphate. In terms of biological role, transfers a GMP moiety from GTP to Mo-molybdopterin (Mo-MPT) cofactor (Moco or molybdenum cofactor) to form Mo-molybdopterin guanine dinucleotide (Mo-MGD) cofactor. This is Probable molybdenum cofactor guanylyltransferase from Bacillus mycoides (strain KBAB4) (Bacillus weihenstephanensis).